The following is an 80-amino-acid chain: Serine palmitoyltransferase small subunit B (80 aa).

The Cytoplasmic segment spans residues 1 to 11; it reads MDMKNMREYMS. A helical transmembrane segment spans residues 12 to 29; sequence WLYYQYLLITGIYVLEPW. Residues 30 to 36 are Lumenal-facing; sequence EQSIFNT. Residues 37-57 form a helical membrane-spanning segment; sequence VLFTMVAMVIYTSYVFVPIHV. Topologically, residues 58 to 80 are cytoplasmic; sequence RLALEFFCELVGGQPESTVALMT.

Belongs to the SPTSS family. SPTSSB subfamily. Component of the serine palmitoyltransferase (SPT) complex, which is composed of SPTLC1, SPTLC2 or SPTLC3 and SPTSSA or SPTSSB. The heterodimer consisting of SPTLC1 and SPTLC2/SPTLC3 forms the catalytic core of the enzyme, while SPTSSA or SPTSSB subunits determine substrate specificity. SPT also interacts with ORMDL proteins, especially ORMDL3, which negatively regulate SPT activity in the presence of ceramides.

The protein resides in the endoplasmic reticulum membrane. Its pathway is lipid metabolism; sphingolipid metabolism. Its function is as follows. Component of the serine palmitoyltransferase multisubunit enzyme (SPT) that catalyzes the initial and rate-limiting step in sphingolipid biosynthesis by condensing L-serine and activated acyl-CoA (most commonly palmitoyl-CoA) to form long-chain bases. The SPT complex is composed of SPTLC1, SPTLC2 or SPTLC3 and SPTSSA or SPTSSB. Within this complex, the heterodimer consisting of SPTLC1 and SPTLC2/SPTLC3 forms the catalytic core. Within the SPT complex, SPTSSB stimulates the catalytic activity and plays a role in substrate specificity. SPT complexes with this subunit showing a preference for longer acyl-CoAs. The SPTLC1-SPTLC2-SPTSSB complex shows a strong preference for C18-CoA substrate, while the SPTLC1-SPTLC3-SPTSSB isozyme displays an ability to use a broader range of acyl-CoAs, without apparent preference. This Danio rerio (Zebrafish) protein is Serine palmitoyltransferase small subunit B (sptssb).